Consider the following 220-residue polypeptide: Deoxyribose-phosphate aldolase (220 aa).

Residue D89 is the Proton donor/acceptor of the active site. K151 serves as the catalytic Schiff-base intermediate with acetaldehyde. K180 functions as the Proton donor/acceptor in the catalytic mechanism.

The protein belongs to the DeoC/FbaB aldolase family. DeoC type 1 subfamily.

It is found in the cytoplasm. The catalysed reaction is 2-deoxy-D-ribose 5-phosphate = D-glyceraldehyde 3-phosphate + acetaldehyde. Its pathway is carbohydrate degradation; 2-deoxy-D-ribose 1-phosphate degradation; D-glyceraldehyde 3-phosphate and acetaldehyde from 2-deoxy-alpha-D-ribose 1-phosphate: step 2/2. In terms of biological role, catalyzes a reversible aldol reaction between acetaldehyde and D-glyceraldehyde 3-phosphate to generate 2-deoxy-D-ribose 5-phosphate. The sequence is that of Deoxyribose-phosphate aldolase from Macrococcus caseolyticus (strain JCSC5402) (Macrococcoides caseolyticum).